A 300-amino-acid polypeptide reads, in one-letter code: NADH-ubiquinone oxidoreductase chain 2 (300 aa).

Helical transmembrane passes span 4 to 24 (FFCIFVVFLCVLNFFTSNVLV), 29 to 49 (FLLMTVVFVCLSKGSGSYVGI), 58 to 78 (SLGLFFLVFNVFLLQFFIVMM), 87 to 107 (FWVFSVTGSLYDWLLMWFLTF), 122 to 142 (FSAFFIFLFGICVCYFQLFVL), 165 to 185 (FLSVVNVIYLFFYYVVLMAFL), 201 to 221 (VLLVFLNVPFSVSFFIKIFVL), 231 to 251 (FLLFLLLMMFLSMLCFSLWLV), and 267 to 287 (VLFFLVFPMMVFSVIYYFSKI).

This sequence belongs to the complex I subunit 2 family.

The protein localises to the mitochondrion inner membrane. The catalysed reaction is a ubiquinone + NADH + 5 H(+)(in) = a ubiquinol + NAD(+) + 4 H(+)(out). Core subunit of the mitochondrial membrane respiratory chain NADH dehydrogenase (Complex I) that is believed to belong to the minimal assembly required for catalysis. Complex I functions in the transfer of electrons from NADH to the respiratory chain. The immediate electron acceptor for the enzyme is believed to be ubiquinone. The sequence is that of NADH-ubiquinone oxidoreductase chain 2 (ND2) from Ascaris suum (Pig roundworm).